The chain runs to 315 residues: Ribosomal RNA small subunit methyltransferase H (315 aa).

S-adenosyl-L-methionine is bound by residues 37 to 39, Asp-57, Asp-105, and Gln-112; that span reads GGH.

It belongs to the methyltransferase superfamily. RsmH family.

It localises to the cytoplasm. It catalyses the reaction cytidine(1402) in 16S rRNA + S-adenosyl-L-methionine = N(4)-methylcytidine(1402) in 16S rRNA + S-adenosyl-L-homocysteine + H(+). In terms of biological role, specifically methylates the N4 position of cytidine in position 1402 (C1402) of 16S rRNA. The protein is Ribosomal RNA small subunit methyltransferase H of Nitrosococcus oceani (strain ATCC 19707 / BCRC 17464 / JCM 30415 / NCIMB 11848 / C-107).